Consider the following 136-residue polypeptide: MREPAPGAEPVATPPASHWFIYMVRTASGLLYTGISTDPLRRLRQHQSGKGSRALRGKGPLTLAWQQAVGEKGAALRLEYRLKQQSKAFKEQLLTQPERWLACSQSWLATAQTQKRPRYAAAKEGSDNRECQRQVD.

One can recognise a GIY-YIG domain in the interval 17–92; sequence SHWFIYMVRT…KQQSKAFKEQ (76 aa). Positions 114–136 are disordered; sequence QKRPRYAAAKEGSDNRECQRQVD. Residues 124-136 are compositionally biased toward basic and acidic residues; that stretch reads EGSDNRECQRQVD.

The protein belongs to the UPF0213 family.

This Aeromonas hydrophila subsp. hydrophila (strain ATCC 7966 / DSM 30187 / BCRC 13018 / CCUG 14551 / JCM 1027 / KCTC 2358 / NCIMB 9240 / NCTC 8049) protein is UPF0213 protein AHA_3736.